The following is a 231-amino-acid chain: MAVERKFIAEGARKARVEKYLTKELKRAGFGGMDIARTPLGTQVTIFAEKPGIVIGKGGKLVHQLTQDLAQNYGVESPQIEVQQVQNPSFNAQIMAERLANALERGWYFRKAGSSIMRRVMDSGALGCEVVIAGKLTGARARTQKFTEGYIKHCGEPSNTIVEKGYAIAIKKLGVIGVQVKIVPADAKMPDHFAIIEQEKKLPAPKTTVTAVIETDNEEPALPDENIDEEV.

One can recognise a KH type-2 domain in the interval 17–86 (VEKYLTKELK…SPQIEVQQVQ (70 aa)).

Belongs to the universal ribosomal protein uS3 family. Part of the 30S ribosomal subunit.

Binds the lower part of the 30S subunit head. This chain is Small ribosomal subunit protein uS3, found in Methanoregula boonei (strain DSM 21154 / JCM 14090 / 6A8).